A 341-amino-acid chain; its full sequence is Ribulose-5-phosphate reductase (341 aa).

Residues cysteine 38, histidine 64, glutamate 65, and glutamate 144 each contribute to the Zn(2+) site.

Belongs to the zinc-containing alcohol dehydrogenase family. Zn(2+) serves as cofactor.

It carries out the reaction D-ribitol 5-phosphate + NADP(+) = D-ribulose 5-phosphate + NADPH + H(+). The protein operates within cell wall biogenesis; poly(ribitol phosphate) teichoic acid biosynthesis. Catalyzes the NADPH dependent reduction of D-ribulose 5-phosphate to D-ribitol 5-phosphate. The sequence is that of Ribulose-5-phosphate reductase from Bacillus spizizenii (strain ATCC 23059 / NRRL B-14472 / W23) (Bacillus subtilis subsp. spizizenii).